Reading from the N-terminus, the 153-residue chain is UPF0178 protein MXAN_5526 (153 aa).

Belongs to the UPF0178 family.

This Myxococcus xanthus (strain DK1622) protein is UPF0178 protein MXAN_5526.